Reading from the N-terminus, the 137-residue chain is Methylglyoxal synthase (137 aa).

The MGS-like domain maps to methionine 1 to valine 137. Substrate contacts are provided by residues histidine 8, lysine 12, threonine 34–threonine 37, and serine 54–glycine 55. Residue aspartate 60 is the Proton donor/acceptor of the active site. Residue histidine 87 participates in substrate binding.

Belongs to the methylglyoxal synthase family.

The enzyme catalyses dihydroxyacetone phosphate = methylglyoxal + phosphate. Functionally, catalyzes the formation of methylglyoxal from dihydroxyacetone phosphate. The protein is Methylglyoxal synthase of Bacillus subtilis (strain 168).